The chain runs to 61 residues: Large ribosomal subunit protein bL32 (61 aa).

This sequence belongs to the bacterial ribosomal protein bL32 family.

The sequence is that of Large ribosomal subunit protein bL32 from Ehrlichia chaffeensis (strain ATCC CRL-10679 / Arkansas).